We begin with the raw amino-acid sequence, 416 residues long: Tryptophan synthase beta chain (416 aa).

Positions M1 to H23 are disordered. At K109 the chain carries N6-(pyridoxal phosphate)lysine.

This sequence belongs to the TrpB family. As to quaternary structure, tetramer of two alpha and two beta chains. Pyridoxal 5'-phosphate serves as cofactor.

It carries out the reaction (1S,2R)-1-C-(indol-3-yl)glycerol 3-phosphate + L-serine = D-glyceraldehyde 3-phosphate + L-tryptophan + H2O. It participates in amino-acid biosynthesis; L-tryptophan biosynthesis; L-tryptophan from chorismate: step 5/5. Its function is as follows. The beta subunit is responsible for the synthesis of L-tryptophan from indole and L-serine. The protein is Tryptophan synthase beta chain of Prochlorococcus marinus (strain MIT 9211).